We begin with the raw amino-acid sequence, 195 residues long: HTH-type transcriptional regulator BetI (195 aa).

The region spanning 8 to 68 (SIRRRQLIDA…ATMRDITSQL (61 aa)) is the HTH tetR-type domain. The H-T-H motif DNA-binding region spans 31–50 (TIAQIARRAGVSTGIISHYF).

It participates in amine and polyamine biosynthesis; betaine biosynthesis via choline pathway [regulation]. Its function is as follows. Repressor involved in the biosynthesis of the osmoprotectant glycine betaine. It represses transcription of the choline transporter BetT and the genes of BetAB involved in the synthesis of glycine betaine. This chain is HTH-type transcriptional regulator BetI, found in Escherichia coli (strain UTI89 / UPEC).